Consider the following 496-residue polypeptide: L-arabinose isomerase (496 aa).

Positions 305, 330, 347, and 446 each coordinate Mn(2+).

Belongs to the arabinose isomerase family. It depends on Mn(2+) as a cofactor.

It catalyses the reaction beta-L-arabinopyranose = L-ribulose. The protein operates within carbohydrate degradation; L-arabinose degradation via L-ribulose; D-xylulose 5-phosphate from L-arabinose (bacterial route): step 1/3. Its function is as follows. Catalyzes the conversion of L-arabinose to L-ribulose. This chain is L-arabinose isomerase, found in Bacillus subtilis (strain 168).